Consider the following 160-residue polypeptide: MCDNSCFCENKQDTIDESLDKTCIFCTIAKGDDRYTEILAEDEDFVCFRDINPGAPHHYLVIPKKHIYSCLSLYADDISLVRGMAEMGRNVLKANNVTDLKDISLGFHVPPYITVPHLHLHVLAPYSQLYKWAINKFRTNWYINEEKTVEILMKGKTQMV.

The HIT domain occupies 24–132 (IFCTIAKGDD…LAPYSQLYKW (109 aa)). AMP-binding positions include 50–51 (DI) and 119–121 (HLH). The short motif at 117 to 121 (HLHLH) is the Histidine triad motif element. His-119 serves as the catalytic Tele-AMP-histidine intermediate.

Belongs to the HINT family. As to quaternary structure, forms dimers to octamers and even larger oligomer.

It is found in the cytoplasm. It localises to the nucleus. The catalysed reaction is adenosine 5'-phosphoramidate + H2O = AMP + NH4(+). In terms of biological role, exhibits adenosine 5'-monophosphoramidase activity, hydrolyzing purine nucleotide phosphoramidates with a single phosphate group such as adenosine 5'monophosphoramidate (AMP-NH2) to yield AMP and NH2. Hydrolyzes lysyl-AMP (AMP-N-epsilon-(N-alpha-acetyl lysine methyl ester)) generated by lysine tRNA ligase. The chain is Adenosine 5'-monophosphoramidase HINT3 (hint3) from Danio rerio (Zebrafish).